The sequence spans 340 residues: MGSTRVRIAIDAMGGDHAPGEIVAGALRAKEELGVEILLVGDPQQIEAALPPKTNLAQVEIVPAEEAIAMDEEPLNAVRRKRKASINVAMDLVKQQKADAVFSAGHSGAAMASALLRLGRLPGIDRPAIGTVFPTIVAGKPVLVLDVGANVDCRPKFLEQFAVMGSAYSQYVLGTTEPKVGLLNIGEEDSKGNDAAVRAHQLLRENSQINFIGNAEGRDVLSGHFDVIVCDGFVGNVLLKFAEAVGEVILQILREELPQGLHGQIGSAFLKPNLKRVKQRMDHAEHGGALLLGVAGVCFIGHGSSQAPSIFNAIRMAKEAVDNQVLQRIQSQYILERESG.

Belongs to the PlsX family. Homodimer. Probably interacts with PlsY.

The protein resides in the cytoplasm. The enzyme catalyses a fatty acyl-[ACP] + phosphate = an acyl phosphate + holo-[ACP]. Its pathway is lipid metabolism; phospholipid metabolism. Functionally, catalyzes the reversible formation of acyl-phosphate (acyl-PO(4)) from acyl-[acyl-carrier-protein] (acyl-ACP). This enzyme utilizes acyl-ACP as fatty acyl donor, but not acyl-CoA. This is Phosphate acyltransferase from Nostoc punctiforme (strain ATCC 29133 / PCC 73102).